The primary structure comprises 201 residues: Small ribosomal subunit protein uS4c (201 aa).

Residues 15-45 (LGDLPGLSRKAIKRSYPPGEHGQKSRKPSEY) form a disordered region. Residues 35–45 (HGQKSRKPSEY) show a composition bias toward basic and acidic residues. An S4 RNA-binding domain is found at 90–153 (MRLDNTVFRL…ASRKLVENYL (64 aa)).

The protein belongs to the universal ribosomal protein uS4 family. As to quaternary structure, part of the 30S ribosomal subunit. Contacts protein S5. The interaction surface between S4 and S5 is involved in control of translational fidelity.

The protein localises to the plastid. It localises to the chloroplast. In terms of biological role, one of the primary rRNA binding proteins, it binds directly to 16S rRNA where it nucleates assembly of the body of the 30S subunit. With S5 and S12 plays an important role in translational accuracy. The polypeptide is Small ribosomal subunit protein uS4c (rps4) (Pyropia yezoensis (Susabi-nori)).